Consider the following 153-residue polypeptide: MKHLRPQFPLILAIYCFCMLQIPSSGFPQPLADPSDGLDIVQLEQLAYCLSQWAPLSRQPKDNQDIYKRFLFHYSRTQEATHPVKTGFPPVHPLMHLAAKLANRRMKRILQRGSGTAAVDFTKKDHTATWGRPFFLFRPRNGRNIEDEAQIQW.

Residues 1-26 (MKHLRPQFPLILAIYCFCMLQIPSSG) form the signal peptide. 3 consecutive propeptides follow at residues 27 to 69 (FPQP…IYKR), 70 to 105 (FLFH…ANRR), and 106 to 108 (MKR). Position 141 is an asparagine amide (asparagine 141). Residues 144–153 (NIEDEAQIQW) constitute a propeptide that is removed on maturation.

The protein belongs to the NmU family.

It is found in the secreted. Functionally, implicated in the regulation of circadian rhythms through autocrine and/or paracrine actions. This is Neuromedin-S (NMS) from Homo sapiens (Human).